The chain runs to 1642 residues: Cholesterol transporter ABCA5 (1642 aa).

The helical transmembrane segment at 32 to 52 (SVQEILFPLFFLFWLILVSMM) threads the bilayer. An N-linked (GlcNAc...) asparagine glycan is attached at N86. 5 helical membrane-spanning segments follow: residues 220-240 (VILI…AIHI), 264-284 (LSWV…MAVI), 297-317 (IVIF…ALML), 328-348 (GVVE…IVLI), and 355-375 (LVWL…AQVM). N388 is a glycosylation site (N-linked (GlcNAc...) asparagine). Residues 396 to 416 (LIITIIMLALDSVFYVLLAVY) traverse the membrane as a helical segment. N458 carries N-linked (GlcNAc...) asparagine glycosylation. The ABC transporter 1 domain occupies 478 to 713 (IRISGIQKSY…WGIGYRLSMY (236 aa)). 514-521 (GHSGTGKS) provides a ligand contact to ATP. A helical transmembrane segment spans residues 864 to 884 (AVLLLLLIFFAVQIFMFFLHH). Residue N919 is glycosylated (N-linked (GlcNAc...) asparagine). The helical transmembrane segment at 967 to 987 (VFSAVFNSTMVYCLPVMMNII) threads the bilayer. N996 is a glycosylation site (N-linked (GlcNAc...) asparagine). A run of 6 helical transmembrane segments spans residues 1021–1041 (LYFQ…YFAM), 1071–1091 (VVDI…LFAF), 1102–1122 (FLAV…FTYI), 1138–1158 (SFIY…TFFL), 1164–1184 (AVFH…GCLI), and 1207–1227 (LLVA…LLQH). Positions 1290-1533 (IMVCNLHKEY…FGKGYFLEIK (244 aa)) constitute an ABC transporter 2 domain. 1333–1340 (GPNGAGKS) contacts ATP.

It belongs to the ABC transporter superfamily. ABCA family. Post-translationally, N-glycosylated. In terms of tissue distribution, expressed in cardiomyocytes, oligodendrocytes and astrocytes in brain, alveolar type 2 cells in lung and follicular cells in the thyroid gland (at protein level). Detected in brain, testis, lung, heart, liver, kidney, skeletal muscle and placenta. Strongly expressed in the basal cells of the seminiferous tubules, interstitial cells consisting of Leydig cells, as well as the tunica albuginea. In the epididymis, specifically and very strongly expressed in the connective tissue outlining the cylindrical epithelium in the corpus and cauda regions, including fibrocytes and smooth muscle cells, as well as within the basal and tall columnar cells of the corpus cylindrical epithelium. Highly expressed in the brain with high expression in cortical and hippocampal neurons and moderately in the lung.

It is found in the golgi apparatus membrane. The protein resides in the lysosome membrane. It localises to the late endosome membrane. The protein localises to the cell membrane. The catalysed reaction is cholesterol(in) + ATP + H2O = cholesterol(out) + ADP + phosphate + H(+). In terms of biological role, cholesterol efflux transporter in macrophages that is responsible for APOAI/high-density lipoproteins (HDL) formation at the plasma membrane under high cholesterol levels and participates in reverse cholesterol transport. May play a role in the processing of autolysosomes. The chain is Cholesterol transporter ABCA5 from Mus musculus (Mouse).